Here is a 1024-residue protein sequence, read N- to C-terminus: Multidrug resistance protein MdtC (1024 aa).

The next 12 membrane-spanning stretches (helical) occupy residues 3-23, 333-353, 360-380, 387-407, 431-451, 463-483, 528-548, 853-873, 875-895, 897-917, 953-973, and 984-1004; these read FLSL…ALVL, EVEQ…FAFL, LIPA…MYLC, LSLM…IVVL, VGFT…PLLM, FAIT…TLTP, WALL…ISMP, LWLI…LYES, VHPL…LLAL, LFNT…IGIV, PIIM…LSSG, and ITIV…TPVV.

It belongs to the resistance-nodulation-cell division (RND) (TC 2.A.6) family. MdtC subfamily. Part of a tripartite efflux system composed of MdtA, MdtB and MdtC. MdtC forms a heteromultimer with MdtB.

It localises to the cell inner membrane. In Erwinia amylovora (strain ATCC 49946 / CCPPB 0273 / Ea273 / 27-3), this protein is Multidrug resistance protein MdtC.